We begin with the raw amino-acid sequence, 159 residues long: Putative pre-16S rRNA nuclease (159 aa).

The protein belongs to the YqgF nuclease family.

The protein resides in the cytoplasm. Could be a nuclease involved in processing of the 5'-end of pre-16S rRNA. This chain is Putative pre-16S rRNA nuclease, found in Synechococcus sp. (strain JA-3-3Ab) (Cyanobacteria bacterium Yellowstone A-Prime).